The primary structure comprises 611 residues: tRNA uridine 5-carboxymethylaminomethyl modification enzyme MnmG (611 aa).

FAD-binding positions include 12–17, Val124, and Ser179; that span reads GGGHAG. 271-285 contributes to the NAD(+) binding site; sequence GPRYCPSVEDKIVRF. FAD is bound at residue Gln368.

This sequence belongs to the MnmG family. Homodimer. Heterotetramer of two MnmE and two MnmG subunits. FAD is required as a cofactor.

The protein resides in the cytoplasm. In terms of biological role, NAD-binding protein involved in the addition of a carboxymethylaminomethyl (cmnm) group at the wobble position (U34) of certain tRNAs, forming tRNA-cmnm(5)s(2)U34. The sequence is that of tRNA uridine 5-carboxymethylaminomethyl modification enzyme MnmG from Mycoplasma mobile (strain ATCC 43663 / 163K / NCTC 11711) (Mesomycoplasma mobile).